Here is a 193-residue protein sequence, read N- to C-terminus: ATP synthase subunit b 2 (193 aa).

Residues 44 to 64 (IFWLVLTLLAIYFVLTKIALP) form a helical membrane-spanning segment.

Belongs to the ATPase B chain family. In terms of assembly, F-type ATPases have 2 components, F(1) - the catalytic core - and F(0) - the membrane proton channel. F(1) has five subunits: alpha(3), beta(3), gamma(1), delta(1), epsilon(1). F(0) has three main subunits: a(1), b(2) and c(10-14). The alpha and beta chains form an alternating ring which encloses part of the gamma chain. F(1) is attached to F(0) by a central stalk formed by the gamma and epsilon chains, while a peripheral stalk is formed by the delta and b chains.

Its subcellular location is the cell inner membrane. Its function is as follows. F(1)F(0) ATP synthase produces ATP from ADP in the presence of a proton or sodium gradient. F-type ATPases consist of two structural domains, F(1) containing the extramembraneous catalytic core and F(0) containing the membrane proton channel, linked together by a central stalk and a peripheral stalk. During catalysis, ATP synthesis in the catalytic domain of F(1) is coupled via a rotary mechanism of the central stalk subunits to proton translocation. Component of the F(0) channel, it forms part of the peripheral stalk, linking F(1) to F(0). The b'-subunit is a diverged and duplicated form of b found in plants and photosynthetic bacteria. The protein is ATP synthase subunit b 2 (atpF2) of Jannaschia sp. (strain CCS1).